A 101-amino-acid chain; its full sequence is Large ribosomal subunit protein uL23 (101 aa).

It belongs to the universal ribosomal protein uL23 family. Part of the 50S ribosomal subunit. Contacts protein L29, and trigger factor when it is bound to the ribosome.

Functionally, one of the early assembly proteins it binds 23S rRNA. One of the proteins that surrounds the polypeptide exit tunnel on the outside of the ribosome. Forms the main docking site for trigger factor binding to the ribosome. This Aromatoleum aromaticum (strain DSM 19018 / LMG 30748 / EbN1) (Azoarcus sp. (strain EbN1)) protein is Large ribosomal subunit protein uL23.